Consider the following 471-residue polypeptide: Coagulation factor IX (471 aa).

Positions 1-28 are cleaved as a signal peptide; the sequence is MKHLNTVMAESPALITIFLLGYLLSTEC. Residues 29 to 46 constitute a propeptide that is removed on maturation; sequence AVFLDRENATKILTRPKR. 11 residues coordinate Ca(2+): Tyr-47, Asn-48, Glu-53, Glu-54, Glu-61, Glu-63, Glu-66, Glu-67, Glu-72, Glu-73, and Glu-76. Residues 47-92 enclose the Gla domain; sequence YNSGKLEEFVRGNLERECIEERCSFEEAREVFENTEKTTEFWKQYV. 4-carboxyglutamate occurs at positions 53, 54, 61, 63, 66, 67, 72, 73, 76, 79, and 82. Glu-61 serves as a coordination point for Mg(2+). A disulfide bridge connects residues Cys-64 and Cys-69. Glu-66 contributes to the Mg(2+) binding site. Glu-72 serves as a coordination point for Mg(2+). Residue Glu-76 participates in Mg(2+) binding. Ca(2+) is bound at residue Glu-82. Glu-82 provides a ligand contact to Mg(2+). An O-linked (GalNAc...) threonine glycan is attached at Thr-85. The Ca(2+) site is built by Glu-86, Asp-93, Gly-94, and Gln-96. Glu-86 bears the 4-carboxyglutamate mark. Glu-86 provides a ligand contact to Mg(2+). The 37-residue stretch at 93–129 folds into the EGF-like 1; calcium-binding domain; sequence DGDQCESNPCLNGGICKDDISSYECWCQVGFEGRNCE. 10 disulfide bridges follow: Cys-97/Cys-108, Cys-102/Cys-117, Cys-119/Cys-128, Cys-134/Cys-145, Cys-141/Cys-155, Cys-157/Cys-170, Cys-178/Cys-345, Cys-262/Cys-278, Cys-392/Cys-406, and Cys-417/Cys-445. Ser-99 carries O-linked (Glc...) serine glycosylation. Residues Asp-110 and Asp-111 each coordinate Ca(2+). A (3R)-3-hydroxyaspartate modification is found at Asp-110. Ser-114 bears the Phosphoserine mark. Positions 130–171 constitute an EGF-like 2 domain; it reads LDATCNIKNGRCKQFCKNSPDNKVICSCTEGYQLAEDQKSCE. A propeptide spans 193 to 236 (activation peptide); sequence AETVFSNMDYENSTEAVFIQDDITDGAILNNVTESSESLNDFTR. The residue at position 202 (Tyr-202) is a Sulfotyrosine. Asn-204 carries N-linked (GlcNAc...) asparagine glycosylation. Position 205 is a phosphoserine (Ser-205). The residue at position 206 (Thr-206) is a Phosphothreonine; alternate. An O-linked (GalNAc...) threonine; alternate glycan is attached at Thr-206. N-linked (GlcNAc...) asparagine glycosylation occurs at Asn-223. O-linked (GalNAc...) threonine glycosylation is found at Thr-225 and Thr-235. Residues 237–469 enclose the Peptidase S1 domain; the sequence is VVGGENAKPG…YVNWIKEKTK (233 aa). His-277 acts as the Charge relay system in catalysis. Ca(2+) contacts are provided by Glu-291, Asn-293, Glu-298, and Glu-301. The active-site Charge relay system is Asp-325. Ser-421 serves as the catalytic Charge relay system.

This sequence belongs to the peptidase S1 family. In terms of assembly, heterodimer of a light chain and a heavy chain; disulfide-linked. Interacts (inactive and activated) with F11 (activated) in calcium-dependent manner. Interacts with SERPINC1. Post-translationally, activated by factor XIa, which excises the activation peptide. The propeptide can also be removed by snake venom protease. Activated by coagulation factor VIIa-tissue factor (F7-F3) complex in calcium-dependent manner. In terms of processing, the iron and 2-oxoglutarate dependent 3-hydroxylation of aspartate and asparagine is (R) stereospecific within EGF domains. Predominantly O-glucosylated at Ser-99 by POGLUT1 in vitro. In terms of tissue distribution, detected in liver.

It localises to the secreted. It catalyses the reaction Selective cleavage of Arg-|-Ile bond in factor X to form factor Xa.. Its function is as follows. Factor IX is a vitamin K-dependent plasma protein that participates in the intrinsic pathway of blood coagulation by converting factor X to its active form in the presence of Ca(2+) ions, phospholipids, and factor VIIIa. The polypeptide is Coagulation factor IX (F9) (Mus musculus (Mouse)).